The primary structure comprises 952 residues: Disintegrin and metalloproteinase domain-containing protein adm-2 (952 aa).

Topologically, residues 1–672 are extracellular; sequence MTDTLDLKLS…NEAYRFRGIT (672 aa). N-linked (GlcNAc...) asparagine glycans are attached at residues Asn125 and Asn301. A Peptidase M12B domain is found at 177–373; sequence RFVELALVAD…GIDLCLFNEP (197 aa). 3 cysteine pairs are disulfide-bonded: Cys287–Cys368, Cys330–Cys352, and Cys332–Cys337. Position 312 (His312) interacts with Zn(2+). Glu313 is a catalytic residue. Zn(2+)-binding residues include His316 and His322. A Disintegrin domain is found at 379-466; it reads DAKCGNGIVE…DCPADFFVQN (88 aa). Asn406 is a glycosylation site (N-linked (GlcNAc...) asparagine). 4 disulfides stabilise this stretch: Cys438–Cys458, Cys624–Cys634, Cys628–Cys640, and Cys642–Cys651. In terms of domain architecture, EGF-like spans 620-652; the sequence is VTAQCLDNCNFRGVCNNVGNCHCERGFGGIACE. A helical transmembrane segment spans residues 673–693; it reads LSSTFLVFFCLFGIFIGGLCV. Residues 694–952 lie on the Cytoplasmic side of the membrane; sequence YYRVKRKRNL…AAIFDQKLKK (259 aa). Disordered regions lie at residues 778–809 and 829–938; these read IPMVTLKNPNLASPTPLLNPAEKEEQNQERAT and SFNT…EKVD. 2 stretches are compositionally biased toward basic and acidic residues: residues 798–809 and 849–873; these read AEKEEQNQERAT and PSDDVLSKLNEDLAKEKNAKFDRLN. The span at 905 to 914 shows a compositional bias: pro residues; it reads QAPPPPPPAH. Positions 925–938 are enriched in basic and acidic residues; the sequence is KVSEDAAATEEKVD.

Zn(2+) serves as cofactor. In terms of tissue distribution, expressed in hyp7 large epidermal syncytium (punctate distribution), seam cell syncytia, anterior epidermis, neurons located in the head, tail and central body, proximal oogenic cells (levels increasing in maturing oocytes) and myoepithelial cells of the spermatheca (at protein level). Not detected in mature sperm cells.

The protein localises to the cell membrane. The protein resides in the endosome membrane. It is found in the lysosome membrane. Its function is as follows. Metalloprotease that cleaves and releases a number of molecules. Negative regulator of lrp-1 protein levels, potentially by influencing its endosomal trafficking. Involved in regulating the molting process. This Caenorhabditis elegans protein is Disintegrin and metalloproteinase domain-containing protein adm-2.